The following is a 134-amino-acid chain: Larval cuticle protein A3A (134 aa).

Residues 23 to 26 (AAPV) form repeat 1. The interval 38–80 (DPHPQYSYGYDIQDGLTGDSKNQQETRDGDVVQGSYSLVDPDG) is disordered. The Chitin-binding type R&amp;R domain maps to 40–106 (HPQYSYGYDI…AVVHREPLVA (67 aa)). The stretch at 111-114 (AAPA) is repeat 2.

In terms of biological role, component of the cuticle of the larva of Tenebrio molitor. This is Larval cuticle protein A3A from Tenebrio molitor (Yellow mealworm beetle).